Here is a 219-residue protein sequence, read N- to C-terminus: Elongation factor Ts, chloroplastic (219 aa).

The protein belongs to the EF-Ts family.

It localises to the plastid. The protein localises to the chloroplast. Functionally, associates with the EF-Tu.GDP complex and induces the exchange of GDP to GTP. It remains bound to the aminoacyl-tRNA.EF-Tu.GTP complex up to the GTP hydrolysis stage on the ribosome. This Guillardia theta (Cryptophyte) protein is Elongation factor Ts, chloroplastic (tsf).